The chain runs to 692 residues: Elongation factor G (692 aa).

The tr-type G domain maps to 8–283 (EKVRNIGIAA…AVVDYLPAPT (276 aa)). Residues 17-24 (AHIDAGKT), 81-85 (DTPGH), and 135-138 (NKMD) contribute to the GTP site.

Belongs to the TRAFAC class translation factor GTPase superfamily. Classic translation factor GTPase family. EF-G/EF-2 subfamily.

It localises to the cytoplasm. Its function is as follows. Catalyzes the GTP-dependent ribosomal translocation step during translation elongation. During this step, the ribosome changes from the pre-translocational (PRE) to the post-translocational (POST) state as the newly formed A-site-bound peptidyl-tRNA and P-site-bound deacylated tRNA move to the P and E sites, respectively. Catalyzes the coordinated movement of the two tRNA molecules, the mRNA and conformational changes in the ribosome. In Nitratiruptor sp. (strain SB155-2), this protein is Elongation factor G.